The following is a 621-amino-acid chain: 1-deoxy-D-xylulose-5-phosphate synthase (621 aa).

Thiamine diphosphate-binding positions include His-80 and 121–123; that span reads GHS. Asp-152 is a Mg(2+) binding site. Residues 153 to 154, Asn-181, Tyr-288, and Glu-370 each bind thiamine diphosphate; that span reads GA. Asn-181 contacts Mg(2+).

This sequence belongs to the transketolase family. DXPS subfamily. In terms of assembly, homodimer. It depends on Mg(2+) as a cofactor. The cofactor is thiamine diphosphate.

The catalysed reaction is D-glyceraldehyde 3-phosphate + pyruvate + H(+) = 1-deoxy-D-xylulose 5-phosphate + CO2. It participates in metabolic intermediate biosynthesis; 1-deoxy-D-xylulose 5-phosphate biosynthesis; 1-deoxy-D-xylulose 5-phosphate from D-glyceraldehyde 3-phosphate and pyruvate: step 1/1. Its function is as follows. Catalyzes the acyloin condensation reaction between C atoms 2 and 3 of pyruvate and glyceraldehyde 3-phosphate to yield 1-deoxy-D-xylulose-5-phosphate (DXP). This is 1-deoxy-D-xylulose-5-phosphate synthase from Erwinia tasmaniensis (strain DSM 17950 / CFBP 7177 / CIP 109463 / NCPPB 4357 / Et1/99).